A 152-amino-acid polypeptide reads, in one-letter code: TRAPP-associated protein TCA17 (152 aa).

It belongs to the TRAPP small subunits family. Sedlin subfamily. Interacts with the TRAPP II complex; TRAPP II subunits TRS33 and TRS65 are required for this interaction.

It localises to the golgi apparatus. It is found in the trans-Golgi network. Functionally, required, together with the TRAPP II subunit TRS33, for TRAPP II complex assembly or stability, and for proper Golgi localization of TRAPP and the Rab GTPase YPT31. This is TRAPP-associated protein TCA17 (TCA17) from Saccharomyces cerevisiae (strain ATCC 204508 / S288c) (Baker's yeast).